The sequence spans 59 residues: U-actitoxin-Aer2a (59 aa).

Post-translationally, contains 5 disulfide bonds.

It is found in the secreted. The protein localises to the nematocyst. This Anemonia erythraea (Sea anemone) protein is U-actitoxin-Aer2a.